A 321-amino-acid polypeptide reads, in one-letter code: Glycerol-3-phosphate dehydrogenase [NAD(P)+] (321 aa).

The NADPH site is built by Ser10, Phe11, Arg31, Arg32, and Lys104. 2 residues coordinate sn-glycerol 3-phosphate: Lys104 and Gly132. Ala136 contacts NADPH. Sn-glycerol 3-phosphate contacts are provided by Lys186, Asp238, Ser248, Arg249, and Asn250. The active-site Proton acceptor is Lys186. An NADPH-binding site is contributed by Arg249. Residue Glu272 participates in NADPH binding.

It belongs to the NAD-dependent glycerol-3-phosphate dehydrogenase family.

Its subcellular location is the cytoplasm. The catalysed reaction is sn-glycerol 3-phosphate + NAD(+) = dihydroxyacetone phosphate + NADH + H(+). The enzyme catalyses sn-glycerol 3-phosphate + NADP(+) = dihydroxyacetone phosphate + NADPH + H(+). Functionally, catalyzes the reduction of the glycolytic intermediate dihydroxyacetone phosphate (DHAP) to sn-glycerol 3-phosphate (G3P). The chain is Glycerol-3-phosphate dehydrogenase [NAD(P)+] from Methanothermobacter thermautotrophicus (strain ATCC 29096 / DSM 1053 / JCM 10044 / NBRC 100330 / Delta H) (Methanobacterium thermoautotrophicum).